The following is a 261-amino-acid chain: tRNA pseudouridine synthase A (261 aa).

Asp51 (nucleophile) is an active-site residue. Tyr109 serves as a coordination point for substrate.

It belongs to the tRNA pseudouridine synthase TruA family. Homodimer.

The enzyme catalyses uridine(38/39/40) in tRNA = pseudouridine(38/39/40) in tRNA. Formation of pseudouridine at positions 38, 39 and 40 in the anticodon stem and loop of transfer RNAs. The protein is tRNA pseudouridine synthase A of Shewanella frigidimarina (strain NCIMB 400).